The chain runs to 480 residues: Ribosome assembly protein rrb1 (480 aa).

Disordered stretches follow at residues 1 to 78 (MSKR…WLPG) and 155 to 176 (QHDE…ILEH). 2 stretches are compositionally biased toward acidic residues: residues 28–52 (VDTE…YIEA) and 158–172 (ENDD…EEDP). A phosphoserine mark is found at S163 and S166. WD repeat units lie at residues 183-225 (GACN…RSLD), 289-329 (SHTA…KTSA), 334-375 (AHPG…SSSS), 385-425 (WHRA…DEEE), and 446-480 (MGQQ…TITF).

Associates with ribosomal protein L3.

The protein resides in the cytoplasm. The protein localises to the nucleus. It is found in the nucleolus. Functionally, involved in regulation of L3 expression and stability and plays a role in early 60S ribosomal subunit assembly. May be required for proper assembly of pre-ribosomal particles during early ribosome biogenesis, presumably by targeting L3 onto the 35S precursor rRNA. This Schizosaccharomyces pombe (strain 972 / ATCC 24843) (Fission yeast) protein is Ribosome assembly protein rrb1 (rrb1).